The chain runs to 1064 residues: WD repeat-containing protein on Y chromosome (1064 aa).

WD repeat units follow at residues 153 to 197 (EEVT…IRTA), 326 to 365 (RVPL…EPSA), 369 to 408 (GHNG…LLQT), 459 to 498 (THAA…RKII), 511 to 550 (IIDI…VVRN), 598 to 638 (FHTD…RRYS), 746 to 785 (KTGD…EAEK), and 827 to 866 (AHLK…LGTL). The segment covering 914-924 (PAKRAEVKAPE) has biased composition (basic and acidic residues). Disordered stretches follow at residues 914 to 935 (PAKR…QTDD) and 1023 to 1064 (GSAL…QQSE). Positions 925–935 (DRDEETAQTDD) are enriched in acidic residues.

The chain is WD repeat-containing protein on Y chromosome from Drosophila pseudoobscura pseudoobscura (Fruit fly).